The following is a 157-amino-acid chain: Small ribosomal subunit protein uS7 (157 aa).

This sequence belongs to the universal ribosomal protein uS7 family. In terms of assembly, part of the 30S ribosomal subunit. Contacts proteins S9 and S11.

One of the primary rRNA binding proteins, it binds directly to 16S rRNA where it nucleates assembly of the head domain of the 30S subunit. Is located at the subunit interface close to the decoding center, probably blocks exit of the E-site tRNA. The sequence is that of Small ribosomal subunit protein uS7 from Francisella tularensis subsp. holarctica (strain OSU18).